We begin with the raw amino-acid sequence, 194 residues long: Histone H1.0 (194 aa).

Met1 bears the N-acetylmethionine mark. The tract at residues 1–26 (MTENSTSTPAAKPKRAKAAKKSTDHP) is disordered. At Thr2 the chain carries N-acetylthreonine; in Histone H1.0, N-terminally processed. The 74-residue stretch at 24 to 97 (DHPKYSDMIV…GASGSFRLAK (74 aa)) folds into the H15 domain. Position 42 is a citrulline (Arg42). Residues 86–194 (GVGASGSFRL…SSAKRASKKK (109 aa)) are disordered. Ser104 is modified (ADP-ribosylserine). The span at 105–194 (VAFKKTKKEV…SSAKRASKKK (90 aa)) shows a compositional bias: basic residues.

The protein belongs to the histone H1/H5 family. ADP-ribosylated on Ser-104 in response to DNA damage.

The protein localises to the nucleus. It localises to the chromosome. Functionally, histones H1 are necessary for the condensation of nucleosome chains into higher-order structures. The histones H1.0 are found in cells that are in terminal stages of differentiation or that have low rates of cell division. The sequence is that of Histone H1.0 (H1-0) from Rattus norvegicus (Rat).